The primary structure comprises 226 residues: Ribonuclease 3 (226 aa).

Residues 6–128 (TKKIQKVLGY…LIGSIYLDSN (123 aa)) enclose the RNase III domain. Glu41 is a Mg(2+) binding site. Residue Asp45 is part of the active site. The Mg(2+) site is built by Asn114 and Glu117. Residue Glu117 is part of the active site. Positions 155–225 (DPKTRLQEYL…AQKALIKLGV (71 aa)) constitute a DRBM domain.

This sequence belongs to the ribonuclease III family. As to quaternary structure, homodimer. Mg(2+) serves as cofactor.

It localises to the cytoplasm. The catalysed reaction is Endonucleolytic cleavage to 5'-phosphomonoester.. Its function is as follows. Digests double-stranded RNA. Involved in the processing of primary rRNA transcript to yield the immediate precursors to the large and small rRNAs (23S and 16S). Processes some mRNAs, and tRNAs when they are encoded in the rRNA operon. Processes pre-crRNA and tracrRNA of type II CRISPR loci if present in the organism. This is Ribonuclease 3 from Buchnera aphidicola subsp. Acyrthosiphon pisum (strain 5A).